Consider the following 245-residue polypeptide: 1-(5-phosphoribosyl)-5-[(5-phosphoribosylamino)methylideneamino] imidazole-4-carboxamide isomerase (245 aa).

D7 (proton acceptor) is an active-site residue. D129 (proton donor) is an active-site residue.

This sequence belongs to the HisA/HisF family.

It localises to the cytoplasm. It carries out the reaction 1-(5-phospho-beta-D-ribosyl)-5-[(5-phospho-beta-D-ribosylamino)methylideneamino]imidazole-4-carboxamide = 5-[(5-phospho-1-deoxy-D-ribulos-1-ylimino)methylamino]-1-(5-phospho-beta-D-ribosyl)imidazole-4-carboxamide. The protein operates within amino-acid biosynthesis; L-histidine biosynthesis; L-histidine from 5-phospho-alpha-D-ribose 1-diphosphate: step 4/9. This Escherichia coli O9:H4 (strain HS) protein is 1-(5-phosphoribosyl)-5-[(5-phosphoribosylamino)methylideneamino] imidazole-4-carboxamide isomerase.